We begin with the raw amino-acid sequence, 405 residues long: Glutamate-pyruvate aminotransferase AlaA (405 aa).

2 residues coordinate L-alanine: glycine 41 and asparagine 179. Lysine 240 bears the N6-(pyridoxal phosphate)lysine mark. Arginine 378 provides a ligand contact to L-alanine.

This sequence belongs to the class-I pyridoxal-phosphate-dependent aminotransferase family. In terms of assembly, homodimer. The cofactor is pyridoxal 5'-phosphate.

It is found in the cytoplasm. It catalyses the reaction L-alanine + 2-oxoglutarate = pyruvate + L-glutamate. It functions in the pathway amino-acid biosynthesis; L-alanine biosynthesis. In terms of biological role, involved in the biosynthesis of alanine. Catalyzes the transamination of pyruvate by glutamate, leading to the formation of L-alanine and 2-oxoglutarate. Is also able to catalyze the reverse reaction. The polypeptide is Glutamate-pyruvate aminotransferase AlaA (Escherichia coli (strain K12)).